Here is a 257-residue protein sequence, read N- to C-terminus: uncharacterized protein (257 aa).

Residues 7–27 (LMLGICLVLLIILIVGYVIMT) traverse the membrane as a helical segment.

Belongs to the staphylococcal tandem lipoprotein family.

It localises to the cell membrane. This is an uncharacterized protein from Staphylococcus aureus (strain Mu50 / ATCC 700699).